Consider the following 346-residue polypeptide: Nicotinate-nucleotide--dimethylbenzimidazole phosphoribosyltransferase (346 aa).

Glutamate 312 acts as the Proton acceptor in catalysis.

The protein belongs to the CobT family.

It catalyses the reaction 5,6-dimethylbenzimidazole + nicotinate beta-D-ribonucleotide = alpha-ribazole 5'-phosphate + nicotinate + H(+). Its pathway is nucleoside biosynthesis; alpha-ribazole biosynthesis; alpha-ribazole from 5,6-dimethylbenzimidazole: step 1/2. In terms of biological role, catalyzes the synthesis of alpha-ribazole-5'-phosphate from nicotinate mononucleotide (NAMN) and 5,6-dimethylbenzimidazole (DMB). This is Nicotinate-nucleotide--dimethylbenzimidazole phosphoribosyltransferase from Cupriavidus taiwanensis (strain DSM 17343 / BCRC 17206 / CCUG 44338 / CIP 107171 / LMG 19424 / R1) (Ralstonia taiwanensis (strain LMG 19424)).